We begin with the raw amino-acid sequence, 892 residues long: Translation initiation factor IF-2 (892 aa).

Residues 138–185 (QRNLAEQQRLAEVDRQRVEEQERKRREEEQAELERQKTESRVVEEILV) show a composition bias toward basic and acidic residues. 2 disordered regions span residues 138–250 (QRNL…EDDS) and 262–298 (AAERARRGSNTRGKGGGSHRSATHRGNENSIRSSGAH). Over residues 207-219 (LPRTVRPTPAARP) the composition is skewed to low complexity. Positions 391-560 (PRPPVVTIMG…SIQAEVLELK (170 aa)) constitute a tr-type G domain. Residues 400 to 407 (GHVDHGKT), 446 to 450 (DTPGH), and 500 to 503 (SKID) each bind GTP.

This sequence belongs to the TRAFAC class translation factor GTPase superfamily. Classic translation factor GTPase family. IF-2 subfamily.

It is found in the cytoplasm. In terms of biological role, one of the essential components for the initiation of protein synthesis. Protects formylmethionyl-tRNA from spontaneous hydrolysis and promotes its binding to the 30S ribosomal subunits. Also involved in the hydrolysis of GTP during the formation of the 70S ribosomal complex. The polypeptide is Translation initiation factor IF-2 (Xylella fastidiosa (strain Temecula1 / ATCC 700964)).